The sequence spans 407 residues: Serine/threonine transporter SstT (407 aa).

A run of 9 helical transmembrane segments spans residues Gly-12–Ser-32, Leu-42–Ile-62, Ile-81–Phe-101, Ala-141–Leu-161, Val-179–Ala-199, Ile-218–Phe-238, Phe-245–Ala-267, Ile-288–Leu-308, and Ile-330–Ile-350.

Belongs to the dicarboxylate/amino acid:cation symporter (DAACS) (TC 2.A.23) family.

Its subcellular location is the cell inner membrane. It carries out the reaction L-serine(in) + Na(+)(in) = L-serine(out) + Na(+)(out). It catalyses the reaction L-threonine(in) + Na(+)(in) = L-threonine(out) + Na(+)(out). Functionally, involved in the import of serine and threonine into the cell, with the concomitant import of sodium (symport system). The polypeptide is Serine/threonine transporter SstT (Campylobacter jejuni subsp. jejuni serotype O:6 (strain 81116 / NCTC 11828)).